The sequence spans 129 residues: MAKEPARVKRRERKNITSGVAHVNASFNNTMITITDAQGNTISWSSAGMMGFKGSRKSTPYAAQMAAEDAGKKAAEHGVKTLEVNVSGPGSGRESALRALQAAGMTITTIRDVTPIPHNGCRPPKRRRV.

The protein belongs to the universal ribosomal protein uS11 family. In terms of assembly, part of the 30S ribosomal subunit. Interacts with proteins S7 and S18. Binds to IF-3.

Functionally, located on the platform of the 30S subunit, it bridges several disparate RNA helices of the 16S rRNA. Forms part of the Shine-Dalgarno cleft in the 70S ribosome. The protein is Small ribosomal subunit protein uS11 of Caulobacter vibrioides (strain ATCC 19089 / CIP 103742 / CB 15) (Caulobacter crescentus).